The sequence spans 185 residues: Elongation factor P (185 aa).

It belongs to the elongation factor P family.

It is found in the cytoplasm. It participates in protein biosynthesis; polypeptide chain elongation. In terms of biological role, involved in peptide bond synthesis. Stimulates efficient translation and peptide-bond synthesis on native or reconstituted 70S ribosomes in vitro. Probably functions indirectly by altering the affinity of the ribosome for aminoacyl-tRNA, thus increasing their reactivity as acceptors for peptidyl transferase. This is Elongation factor P from Oleidesulfovibrio alaskensis (strain ATCC BAA-1058 / DSM 17464 / G20) (Desulfovibrio alaskensis).